A 66-amino-acid polypeptide reads, in one-letter code: Large ribosomal subunit protein bL33c (66 aa).

This sequence belongs to the bacterial ribosomal protein bL33 family.

It localises to the plastid. Its subcellular location is the chloroplast. This chain is Large ribosomal subunit protein bL33c, found in Brachypodium distachyon (Purple false brome).